The primary structure comprises 176 residues: Ribosome maturation factor RimM (176 aa).

The 80-residue stretch at 93–172 (KDEFFYFDII…KIQVKNSLDI (80 aa)) folds into the PRC barrel domain.

The protein belongs to the RimM family. Binds ribosomal protein uS19.

It is found in the cytoplasm. Functionally, an accessory protein needed during the final step in the assembly of 30S ribosomal subunit, possibly for assembly of the head region. Essential for efficient processing of 16S rRNA. May be needed both before and after RbfA during the maturation of 16S rRNA. It has affinity for free ribosomal 30S subunits but not for 70S ribosomes. The protein is Ribosome maturation factor RimM of Campylobacter fetus subsp. fetus (strain 82-40).